Reading from the N-terminus, the 153-residue chain is Pheromone-binding protein Gp-9 (153 aa).

Residues 1–19 form the signal peptide; the sequence is MKTFVLHIFIFALVAFASA. 3 cysteine pairs are disulfide-bonded: Cys-37–Cys-77, Cys-73–Cys-129, and Cys-118–Cys-138.

The protein belongs to the PBP/GOBP family. As to quaternary structure, homodimer.

The protein localises to the secreted. Functionally, colony queen number, a major feature of social organization, is associated with worker genotype for Gp-9. Colonies are headed by either a single reproductive queen (monogyne form) or multiple queens (polygyne form). Differences in worker Gp-9 genotypes between social forms may cause differences in workers' abilities to recognize queens and regulate their numbers. This is Pheromone-binding protein Gp-9 from Solenopsis sp. (strain B0-153) (Fire ant).